We begin with the raw amino-acid sequence, 488 residues long: (Z)-2-((N-methylformamido)methylene)-5-hydroxybutyrolactone dehydrogenase (488 aa).

NAD(+)-binding positions include 149–150 (WN) and 226–227 (GG). Glu248 acts as the Proton acceptor in catalysis. Leu249 serves as a coordination point for NAD(+). Cys282 functions as the Nucleophile in the catalytic mechanism. Glu380 contacts NAD(+).

It belongs to the aldehyde dehydrogenase family. In terms of assembly, homodimer.

The enzyme catalyses (Z)-2-((N-methylformamido)methylene)-5-hydroxybutanolactone + NAD(+) + H2O = (E)-2-((N-methylformamido) methylene)succinate + NADH + 3 H(+). Functionally, involved in the degradation of the pyridine ring of trigonelline (TG; N-methylnicotinate) into succinate and methylamine as carbon and nitrogen sources, respectively. Catalyzes the NAD(+)-dependent oxidation of (Z)-2-((N-methylformamido)methylene)-5-hydroxybutyrolactone (MFMB) to yield (E)-2-((N-methylformamido)methylene)succinate (MFMS). The polypeptide is (Z)-2-((N-methylformamido)methylene)-5-hydroxybutyrolactone dehydrogenase (Acinetobacter baylyi (strain ATCC 33305 / BD413 / ADP1)).